Reading from the N-terminus, the 823-residue chain is Dolichyl-diphosphooligosaccharide--protein glycosyltransferase subunit STT3B (823 aa).

Residues 1–58 form a disordered region; it reads MAEPSAPESKHKSSLNSSPWSGLMALGNSRHGHHGPGTQSASSAAAPKPGPPAGLSGG. N-acetylalanine is present on A2. At 2–41 the chain is on the cytoplasmic side; it reads AEPSAPESKHKSSLNSSPWSGLMALGNSRHGHHGPGTQSA. S13, S18, and S29 each carry phosphoserine. Residues 42-83 traverse the membrane as a helical segment; sequence SSAAAPKPGPPAGLSGGLSQPAGWQSLLSFTILFLAWLAGFS. Topologically, residues 84-170 are lumenal; that stretch reads SRLFAVIRFE…VHIRDVCVFL (87 aa). Residues 98–100 carry the DXD motif 1 motif; the sequence is EFD. A Mn(2+)-binding site is contributed by D100. A helical membrane pass occupies residues 171-189; that stretch reads APTFSGLTSISTFLLTREL. The Cytoplasmic portion of the chain corresponds to 190–191; that stretch reads WN. The helical transmembrane segment at 192–209 threads the bilayer; sequence QGAGLLAACFIAIVPGYI. The Lumenal segment spans residues 210–220; that stretch reads SRSVAGSFDNE. Residues D218 and E220 each coordinate Mn(2+). The short motif at 218-220 is the DXD motif 2 element; sequence DNE. A helical membrane pass occupies residues 221 to 240; sequence GIAIFALQFTYYLWVKSVKT. At 241-242 the chain is on the cytoplasmic side; it reads GS. A helical transmembrane segment spans residues 243–257; that stretch reads VFWTMCCCLSYFYMV. Over 258–262 the chain is Lumenal; sequence SAWGG. Residues 263-279 traverse the membrane as a helical segment; the sequence is YVFIINLIPLHVFVLLL. At 280-284 the chain is on the cytoplasmic side; sequence MQRYS. The helical transmembrane segment at 285-310 threads the bilayer; it reads KRVYIAYSTFYIVGLILSMQIPFVGF. The Lumenal portion of the chain corresponds to 311–318; the sequence is QPIRTSEH. A helical transmembrane segment spans residues 319–338; it reads MAAAGVFALLQAYAFLQYLR. Over 339–347 the chain is Cytoplasmic; sequence DRLTKQEFQ. A helical transmembrane segment spans residues 348-368; it reads TLFFLGVSLAAGAVFLSVIYL. The Lumenal segment spans residues 369 to 407; sequence TYTGYIAPWSGRFYSLWDTGYAKIHIPIIASVSEHQPTT. Residues 399-402 carry the SVSE motif motif; sequence SVSE. A helical transmembrane segment spans residues 408–430; sequence WVSFFFDLHILVCTFPAGLWFCI. The Cytoplasmic portion of the chain corresponds to 431 to 436; sequence KNINDE. Residues 437 to 453 traverse the membrane as a helical segment; that stretch reads RVFVALYAISAVYFAGV. The Lumenal portion of the chain corresponds to 454-457; the sequence is MVRL. R456 is a dolichyl diphosphooligosaccharide binding site. Residues 458–479 form a helical membrane-spanning segment; it reads MLTLTPVVCMLSAIAFSNVFEH. Topologically, residues 480–523 are cytoplasmic; it reads YLGDDMKRENPPVEDSSDEDDKRNPGNLYDKAGKVRKHVTEQEK. The disordered stretch occupies residues 487-526; sequence RENPPVEDSSDEDDKRNPGNLYDKAGKVRKHVTEQEKPEE. S495 and S496 each carry phosphoserine. Residues 517 to 526 are compositionally biased toward basic and acidic residues; that stretch reads HVTEQEKPEE. A helical membrane pass occupies residues 524–549; sequence PEEGLGPNIKSIVTMLMLMLLMMFAV. Residues 550–823 are Lumenal-facing; sequence HCTWVTSNAY…KGKKTSKKTV (274 aa). The tract at residues 601–603 is interacts with target acceptor peptide in protein substrate; the sequence is WWD. A WWDYG motif motif is present at residues 601-605; that stretch reads WWDYG. A dolichyl diphosphooligosaccharide-binding site is contributed by Y606. 2 N-linked (GlcNAc...) asparagine glycosylation sites follow: N613 and N620. N-linked (GlcNAc...) (high mannose) asparagine glycosylation is present at N624. N638 is a glycosylation site (N-linked (GlcNAc...) asparagine). Residues 668-675 carry the DK motif motif; sequence DINKFLWM.

This sequence belongs to the STT3 family. In terms of assembly, component of the oligosaccharyltransferase (OST) complex. There are 2 OST complexes, OST-A and OST-B, which contain STT3A or STT3B as catalytic subunit, respectively. OST-A and OST-B contain common core subunits RPN1, RPN2, OST48, OST4, DAD1 and TMEM258, and OST-B contains either MAGT1 or TUSC3 as specific accessory subunit. Requires Mg(2+) as cofactor. It depends on Mn(2+) as a cofactor.

It is found in the endoplasmic reticulum membrane. The enzyme catalyses a di-trans,poly-cis-dolichyl diphosphooligosaccharide + L-asparaginyl-[protein] = N(4)-(oligosaccharide-(1-&gt;4)-N-acetyl-beta-D-glucosaminyl-(1-&gt;4)-N-acetyl-beta-D-glucosaminyl)-L-asparaginyl-[protein] + a di-trans,poly-cis-dolichyl diphosphate + H(+). Its pathway is protein modification; protein glycosylation. In terms of biological role, catalytic subunit of the oligosaccharyl transferase (OST) complex that catalyzes the initial transfer of a defined glycan (Glc(3)Man(9)GlcNAc(2) in eukaryotes) from the lipid carrier dolichol-pyrophosphate to an asparagine residue within an Asn-X-Ser/Thr consensus motif in nascent polypeptide chains, the first step in protein N-glycosylation. N-glycosylation occurs cotranslationally and the complex associates with the Sec61 complex at the channel-forming translocon complex that mediates protein translocation across the endoplasmic reticulum (ER). All subunits are required for a maximal enzyme activity. This subunit contains the active site and the acceptor peptide and donor lipid-linked oligosaccharide (LLO) binding pockets. STT3B is present in a small subset of OST complexes and mediates both cotranslational and post-translational N-glycosylation of target proteins: STT3B-containing complexes are required for efficient post-translational glycosylation and while they are less competent than STT3A-containing complexes for cotranslational glycosylation, they have the ability to mediate glycosylation of some nascent sites that are not accessible for STT3A. STT3B-containing complexes also act post-translationally and mediate modification of skipped glycosylation sites in unfolded proteins. Plays a role in ER-associated degradation (ERAD) pathway that mediates ubiquitin-dependent degradation of misfolded endoplasmic reticulum proteins by mediating N-glycosylation of unfolded proteins, which are then recognized by the ERAD pathway and targeted for degradation. In Mus musculus (Mouse), this protein is Dolichyl-diphosphooligosaccharide--protein glycosyltransferase subunit STT3B.